The primary structure comprises 107 residues: uncharacterized protein (107 aa).

2 consecutive transmembrane segments (helical) span residues 14–34 (YLAE…IVAW) and 68–88 (FFVF…LVPI).

Its subcellular location is the cell membrane. This is an uncharacterized protein from Haemophilus influenzae (strain ATCC 51907 / DSM 11121 / KW20 / Rd).